The sequence spans 75 residues: Small ribosomal subunit protein bS18 (75 aa).

This sequence belongs to the bacterial ribosomal protein bS18 family. As to quaternary structure, part of the 30S ribosomal subunit. Forms a tight heterodimer with protein bS6.

Binds as a heterodimer with protein bS6 to the central domain of the 16S rRNA, where it helps stabilize the platform of the 30S subunit. This chain is Small ribosomal subunit protein bS18 (rbsR), found in Rhodobacter capsulatus (strain ATCC BAA-309 / NBRC 16581 / SB1003).